A 729-amino-acid polypeptide reads, in one-letter code: MASAAIFSSLRRRRSPSLEAFLAPVDLSGVALVQTLASISSEVVSCFTSVRFSFQRKNARSLIRKIEIFVVLFEFLVDSNWGSTTTRTRARRRSKSSVSESTALLCLKELYLLLYRSKILVDYCAQSSKLWLLLQNPSISGYFHDLNQEISTLLDVLPVNDLGLSDDIREQIELLQRQSRKARLYIDKNDESLRESFYSFLDGFENGKIPSSVDLRMFFVEKLGIRDSKSCRSEIEFLEEQIVNHDGDLEPTGSVINGFVAITRYCRFLLFGFEEDGMEWWIENNPKKPRKGFVAQEIGDTFITVPKDFVCPISLDLMTDPVIISTGQTYDRNSIARWIEEGHCTCPKTGQMLMDSRIVPNRALKNLIVQWCTASGISYESEFTDSPNESFASALPTKAAVEANKATVSILIKYLADGSQAAQTVAAREIRLLAKTGKENRAYIAEAGAIPHLCRLLTSENAIAQENSVTAMLNLSIYEKNKSRIMEEGDCLESIVSVLVSGLTVEAQENAAATLFSLSAVHEYKKRIAIVDQCVEALALLLQNGTPRGKKDAVTALYNLSTHPDNCSRMIEGGGVSSLVGALKNEGVAEEAAGALALLVRQSLGAEAIGKEDSAVAGLMGMMRCGTPRGKENAVAALLELCRSGGAAVAEKVLRAPAIAGLLQTLLFTGTKRARRKAASLARVFQRRENAAMRSGVYGFVGNTNGNRDGGFTTDVSVPISISISVPVL.

Positions 304–378 (TVPKDFVCPI…VQWCTASGIS (75 aa)) constitute a U-box domain. ARM repeat units lie at residues 438–477 (KENRAYIAEAGAIPHLCRLLTSENAIAQENSVTAMLNLSI), 479–520 (EKNK…SLSA), 523–562 (EYKKRIAIVDQCVEALALLLQNGTPRGKKDAVTALYNLST), and 564–601 (PDNCSRMIEGGGVSSLVGALKNEGVAEEAAGALALLVR).

It carries out the reaction S-ubiquitinyl-[E2 ubiquitin-conjugating enzyme]-L-cysteine + [acceptor protein]-L-lysine = [E2 ubiquitin-conjugating enzyme]-L-cysteine + N(6)-ubiquitinyl-[acceptor protein]-L-lysine.. Its pathway is protein modification; protein ubiquitination. Its function is as follows. Functions as an E3 ubiquitin ligase. The protein is U-box domain-containing protein 17 (PUB17) of Arabidopsis thaliana (Mouse-ear cress).